We begin with the raw amino-acid sequence, 210 residues long: ATP-dependent dethiobiotin synthetase BioD (210 aa).

Residue 13–18 (DVGKTV) participates in ATP binding. Position 17 (Thr-17) interacts with Mg(2+). Lys-33 is an active-site residue. 2 residues coordinate Mg(2+): Arg-47 and Glu-101. ATP is bound by residues 101–104 (EGAG) and 185–187 (PPL).

This sequence belongs to the dethiobiotin synthetase family. Homodimer. Mg(2+) is required as a cofactor.

It localises to the cytoplasm. It carries out the reaction (7R,8S)-7,8-diammoniononanoate + CO2 + ATP = (4R,5S)-dethiobiotin + ADP + phosphate + 3 H(+). It participates in cofactor biosynthesis; biotin biosynthesis; biotin from 7,8-diaminononanoate: step 1/2. Functionally, catalyzes a mechanistically unusual reaction, the ATP-dependent insertion of CO2 between the N7 and N8 nitrogen atoms of 7,8-diaminopelargonic acid (DAPA, also called 7,8-diammoniononanoate) to form a ureido ring. This chain is ATP-dependent dethiobiotin synthetase BioD, found in Afipia carboxidovorans (strain ATCC 49405 / DSM 1227 / KCTC 32145 / OM5) (Oligotropha carboxidovorans).